Reading from the N-terminus, the 1616-residue chain is Replicase large subunit (1616 aa).

A methyltransferase region spans residues 50-458 (FSKVVSEEQT…QSLSMTFFLH (409 aa)). One can recognise an Alphavirus-like MT domain in the interval 72–281 (TFYNTQNAVH…HSYSNILKYV (210 aa)). Residues 801–963 (VVYSDMAKLR…KLEVDEVETR (163 aa)) enclose the (+)RNA virus helicase ATP-binding domain. The helicase stretch occupies residues 830 to 1085 (LVDGVPGCGK…RHTKSLKYYT (256 aa)). ATP-binding positions include 836 to 841 (GCGKTK), Arg-868, 967 to 968 (LR), Arg-1076, and 1097 to 1100 (DLER). Positions 964–1116 (RTTLRCPADV…DMYKVDAGTQ (153 aa)) constitute a (+)RNA virus helicase C-terminal domain. One can recognise a RdRp catalytic domain in the interval 1380–1493 (MDVLELDVSK…YFPKGCEYPD (114 aa)).

Belongs to the ssRNA positive-strand viruses RNA-directed RNA polymerase family. As to quaternary structure, heterodimer of a large and a small subunit. May interact with the host proteins TOM1 and ARL8. Interacts via an ATP bridge, with host protein Tm-1 (e.g. tomato Tm-1 AC A7M6E7).

The catalysed reaction is RNA(n) + a ribonucleoside 5'-triphosphate = RNA(n+1) + diphosphate. It carries out the reaction ATP + H2O = ADP + phosphate + H(+). In resistant plants, is bound by host protein Tm-1 (e.g. tomato Tm-1 AC A7M6E7), thereby inhibiting replication complex activity. Is an RNA-dependent RNA polymerase active in viral RNA replication. Its function is as follows. Is a methyltransferase active in RNA capping and an RNA helicase. Methyltransferase displays a cytoplasmic capping enzyme activity. This function is necessary since all viral RNAs are synthesized in the cytoplasm, and host capping enzymes are restricted to the nucleus. Helicase region probably exhibits NTPase and RNA unwinding activities (Potential). It also acts as a suppressor of RNA-mediated gene silencing, also known as post-transcriptional gene silencing (PTGS), a mechanism of plant viral defense that limits the accumulation of viral RNAs. May mediate silencing suppression through either inhibition of HEN1-mediated siRNA or siRNA demethylation. The chain is Replicase large subunit from Tomato mosaic virus (strain L) (ToMV).